The following is a 361-amino-acid chain: MKAATAYINLEALQHNLQRVKQQAPESKIMAVVKANGYGHGLRHIARHALGADAFGVARIEEALQLRASGVVKPILLLEGFYSPGDLPVLVTNNIQTVVHCEEQLQALEQAQLETPVMVWLKVDSGMHRLGVRPEQYQDFVARLHQCENVAKPLRYMSHFGCADELDKSTTVEQTELFLSLTQGCQGERSLAASAGLLAWPQSQLEWVRPGIIMYGVSPFVEKSAVQLGYQPVMTLKSHLIAVREVKAGESVGYGGTWTSQRDTKIGVIAIGYGDGYPRTAPNGTPVVVNGRRVPIAGRVSMDMLTVDLGPDACDRVGDEAMLWGNELPVEEVAAHIGTIGYELVTKLTSRVEMSYYGAGV.

The active-site Proton acceptor; specific for D-alanine is lysine 34. N6-(pyridoxal phosphate)lysine is present on lysine 34. Arginine 129 is a binding site for substrate. Tyrosine 254 serves as the catalytic Proton acceptor; specific for L-alanine. Position 302 (methionine 302) interacts with substrate.

This sequence belongs to the alanine racemase family. It depends on pyridoxal 5'-phosphate as a cofactor.

The catalysed reaction is L-alanine = D-alanine. The enzyme catalyses L-serine = D-serine. Its pathway is amino-acid biosynthesis; D-alanine biosynthesis; D-alanine from L-alanine: step 1/1. Its function is as follows. Catalyzes the interconversion of L-alanine and D-alanine. Likely plays an important role in supplying D-alanine, which is an indispensable constituent in the biosynthesis of bacterial cell-wall peptidoglycan. To a lesser extent, is also able to racemize L-serine and D-serine. Does not act on other proteinogenic amino-acids. The polypeptide is Alanine racemase (alr1) (Vibrio cholerae serotype O1 (strain ATCC 39315 / El Tor Inaba N16961)).